The following is a 277-amino-acid chain: SF-assemblin (277 aa).

The disordered stretch occupies residues methionine 1–serine 20. The nonhelical region stretch occupies residues methionine 1–glycine 27. A rod region spans residues serine 28–alanine 277. Residues arginine 70–glutamine 90 are a coiled coil.

Belongs to the SF-assemblin family. Post-translationally, the N-terminus is blocked.

It localises to the cytoplasm. The protein localises to the cytoskeleton. Functionally, major component of the striated microtubule-associated fibers (SMAFs; system-I-fibers). This Dunaliella bioculata (Green alga) protein is SF-assemblin.